A 117-amino-acid chain; its full sequence is Minor capsid protein VP2 (117 aa).

The protein belongs to the lagovirus VP2 protein family. In terms of assembly, homooligomer. The portal-like structure consists in 12 copies of VP2. Interacts with capsid protein VP1.

It is found in the virion. The protein localises to the host cytoplasm. Functionally, minor structural protein that forms a portal-like structure at a unique three-fold axis of symmetry, following binding to the host receptor. The channel formed by VP2 may allow the delivery of the viral genome through the host endosomal membrane. In Oryctolagus cuniculus (Rabbit), this protein is Minor capsid protein VP2.